A 469-amino-acid chain; its full sequence is Receptor-type adenylate cyclase (469 aa).

Over 1–59 (VDTAEKLSKNGCASNYGATQISVWSMARALNASIPPLTNPMTPSMTFRNSNAGRISGVA) the chain is Extracellular. N31 is a glycosylation site (N-linked (GlcNAc...) asparagine). The chain crosses the membrane as a helical span at residues 60–80 (LVGVIIGGALALFLVVALGVV). Residues 81–469 (PYFFLHNTRD…IDLENDSTTS (389 aa)) lie on the Cytoplasmic side of the membrane. Residues 103-257 (TLIFTDIESS…RTSNMAARTE (155 aa)) enclose the Guanylate cyclase domain. 2 residues coordinate Mg(2+): D108 and D151.

This sequence belongs to the adenylyl cyclase class-3 family. It depends on Mg(2+) as a cofactor.

The protein localises to the cell membrane. The enzyme catalyses ATP = 3',5'-cyclic AMP + diphosphate. Its function is as follows. Could act as a receptor for an unknown ligand. The polypeptide is Receptor-type adenylate cyclase (ESAG4C) (Trypanosoma equiperdum).